Here is a 225-residue protein sequence, read N- to C-terminus: ATP-dependent dethiobiotin synthetase BioD (225 aa).

12-17 (EIGKTY) provides a ligand contact to ATP. Mg(2+) is bound at residue threonine 16. Residue lysine 37 is part of the active site. Serine 41 contacts substrate. ATP-binding positions include aspartate 55, 122–125 (EGVG), and 182–183 (SE). Aspartate 55 and glutamate 122 together coordinate Mg(2+).

Belongs to the dethiobiotin synthetase family. As to quaternary structure, homodimer. Mg(2+) serves as cofactor.

It localises to the cytoplasm. The enzyme catalyses (7R,8S)-7,8-diammoniononanoate + CO2 + ATP = (4R,5S)-dethiobiotin + ADP + phosphate + 3 H(+). Its pathway is cofactor biosynthesis; biotin biosynthesis; biotin from 7,8-diaminononanoate: step 1/2. Catalyzes a mechanistically unusual reaction, the ATP-dependent insertion of CO2 between the N7 and N8 nitrogen atoms of 7,8-diaminopelargonic acid (DAPA, also called 7,8-diammoniononanoate) to form a ureido ring. The chain is ATP-dependent dethiobiotin synthetase BioD from Methylobacterium nodulans (strain LMG 21967 / CNCM I-2342 / ORS 2060).